Reading from the N-terminus, the 294-residue chain is Glycine--tRNA ligase alpha subunit (294 aa).

The protein belongs to the class-II aminoacyl-tRNA synthetase family. Tetramer of two alpha and two beta subunits.

It is found in the cytoplasm. The enzyme catalyses tRNA(Gly) + glycine + ATP = glycyl-tRNA(Gly) + AMP + diphosphate. This is Glycine--tRNA ligase alpha subunit from Polynucleobacter asymbioticus (strain DSM 18221 / CIP 109841 / QLW-P1DMWA-1) (Polynucleobacter necessarius subsp. asymbioticus).